Consider the following 361-residue polypeptide: Large ribosomal subunit protein mL45 (361 aa).

Residues 319-361 (EPPKELSAGDAEVKQVDSVGEQSKEQLPLATPVESHTKPSLAI) form a disordered region.

The protein belongs to the mitochondrion-specific ribosomal protein mL45 family.

It localises to the mitochondrion. The sequence is that of Large ribosomal subunit protein mL45 (mRpL45) from Drosophila melanogaster (Fruit fly).